Here is a 347-residue protein sequence, read N- to C-terminus: Selenide, water dikinase (347 aa).

Cys-17 is a catalytic residue. Residues Lys-20 and 48–50 (TRD) contribute to the ATP site. Asp-51 is a binding site for Mg(2+). Residues Asp-68, Asp-91, and 139-141 (GHS) each bind ATP. A Mg(2+)-binding site is contributed by Asp-91. Asp-227 serves as a coordination point for Mg(2+).

The protein belongs to the selenophosphate synthase 1 family. Class I subfamily. In terms of assembly, homodimer. The cofactor is Mg(2+).

The enzyme catalyses hydrogenselenide + ATP + H2O = selenophosphate + AMP + phosphate + 2 H(+). Synthesizes selenophosphate from selenide and ATP. In Salmonella typhi, this protein is Selenide, water dikinase.